A 119-amino-acid polypeptide reads, in one-letter code: Large ribosomal subunit protein bL20 (119 aa).

This sequence belongs to the bacterial ribosomal protein bL20 family.

Binds directly to 23S ribosomal RNA and is necessary for the in vitro assembly process of the 50S ribosomal subunit. It is not involved in the protein synthesizing functions of that subunit. The protein is Large ribosomal subunit protein bL20 of Stenotrophomonas maltophilia (strain K279a).